A 199-amino-acid chain; its full sequence is Segregation and condensation protein B (199 aa).

Belongs to the ScpB family. In terms of assembly, homodimer. Homodimerization may be required to stabilize the binding of ScpA to the Smc head domains. Component of a cohesin-like complex composed of ScpA, ScpB and the Smc homodimer, in which ScpA and ScpB bind to the head domain of Smc. The presence of the three proteins is required for the association of the complex with DNA.

The protein resides in the cytoplasm. Its function is as follows. Participates in chromosomal partition during cell division. May act via the formation of a condensin-like complex containing Smc and ScpA that pull DNA away from mid-cell into both cell halves. This is Segregation and condensation protein B from Leuconostoc mesenteroides subsp. mesenteroides (strain ATCC 8293 / DSM 20343 / BCRC 11652 / CCM 1803 / JCM 6124 / NCDO 523 / NBRC 100496 / NCIMB 8023 / NCTC 12954 / NRRL B-1118 / 37Y).